A 471-amino-acid chain; its full sequence is Putative metabolite transport protein YncC (471 aa).

Transmembrane regions (helical) follow at residues 13 to 33, 50 to 70, 88 to 108, 111 to 131, 146 to 166, 175 to 195, 256 to 276, 295 to 315, 323 to 343, 358 to 378, 393 to 413, and 416 to 436; these read LIMI…GVIN, VTEG…ALLC, FLFF…IMAV, FLLG…LAEM, LMIV…GVTM, YMLV…LKVP, LLWI…NSIM, IANI…IWLV, ILLI…IFSI, LTVL…WLVI, ISVF…PILL, and VGLS…IGFV.

This sequence belongs to the major facilitator superfamily. Sugar transporter (TC 2.A.1.1) family.

The protein localises to the cell membrane. This Bacillus subtilis (strain 168) protein is Putative metabolite transport protein YncC (yncC).